The chain runs to 137 residues: Small ribosomal subunit protein eS17 (137 aa).

It belongs to the eukaryotic ribosomal protein eS17 family. In terms of assembly, component of the small ribosomal subunit. Mature ribosomes consist of a small (40S) and a large (60S) subunit. The 40S subunit contains about 32 different proteins and 1 molecule of RNA (18S). The 60S subunit contains 45 different proteins and 3 molecules of RNA (25S, 5.8S and 5S).

It is found in the cytoplasm. Its function is as follows. Component of the ribosome, a large ribonucleoprotein complex responsible for the synthesis of proteins in the cell. The small ribosomal subunit (SSU) binds messenger RNAs (mRNAs) and translates the encoded message by selecting cognate aminoacyl-transfer RNA (tRNA) molecules. The large subunit (LSU) contains the ribosomal catalytic site termed the peptidyl transferase center (PTC), which catalyzes the formation of peptide bonds, thereby polymerizing the amino acids delivered by tRNAs into a polypeptide chain. The nascent polypeptides leave the ribosome through a tunnel in the LSU and interact with protein factors that function in enzymatic processing, targeting, and the membrane insertion of nascent chains at the exit of the ribosomal tunnel. This chain is Small ribosomal subunit protein eS17 (RPS17B), found in Candida albicans (strain SC5314 / ATCC MYA-2876) (Yeast).